The chain runs to 361 residues: Versatile peroxidase VPL2 (361 aa).

The signal sequence occupies residues methionine 1–alanine 22. Residues alanine 23–arginine 30 constitute a propeptide that is removed on maturation. 4 disulfides stabilise this stretch: cysteine 33–cysteine 45, cysteine 44–cysteine 308, cysteine 64–cysteine 144, and cysteine 272–cysteine 337. Glutamate 66 and glutamate 70 together coordinate Mn(2+). Catalysis depends on histidine 77, which acts as the Proton acceptor. Ca(2+) contacts are provided by aspartate 78, glycine 90, aspartate 92, and serine 94. The N-linked (GlcNAc...) asparagine glycan is linked to asparagine 126. The active-site Tryptophan radical intermediate is the tryptophan 194. Histidine 199 provides a ligand contact to heme b. Residue serine 200 coordinates Ca(2+). Alanine 203 to valine 207 provides a ligand contact to heme b. Mn(2+) is bound at residue aspartate 205. Ca(2+) is bound by residues aspartate 217, threonine 219, valine 222, and aspartate 224.

It belongs to the peroxidase family. Ligninase subfamily. It depends on heme b as a cofactor. Requires Ca(2+) as cofactor.

It is found in the secreted. The enzyme catalyses 1-(4-hydroxy-3-methoxyphenyl)-2-(2-methoxyphenoxy)propane-1,3-diol + H2O2 = guaiacol + vanillin + glycolaldehyde + H2O. The catalysed reaction is 2 Mn(2+) + H2O2 + 2 H(+) = 2 Mn(3+) + 2 H2O. Its function is as follows. A versatile ligninolytic peroxidase that combines the substrate specificity characteristics of the two other ligninolytic peroxidases, manganese peroxidase and lignin peroxidase. This chain is Versatile peroxidase VPL2 (vpl2), found in Pleurotus eryngii (Boletus of the steppes).